We begin with the raw amino-acid sequence, 485 residues long: Glutamyl-tRNA(Gln) amidotransferase subunit A (485 aa).

Residues Lys79 and Ser154 each act as charge relay system in the active site. Ser178 acts as the Acyl-ester intermediate in catalysis.

This sequence belongs to the amidase family. GatA subfamily. As to quaternary structure, heterotrimer of A, B and C subunits.

The catalysed reaction is L-glutamyl-tRNA(Gln) + L-glutamine + ATP + H2O = L-glutaminyl-tRNA(Gln) + L-glutamate + ADP + phosphate + H(+). Functionally, allows the formation of correctly charged Gln-tRNA(Gln) through the transamidation of misacylated Glu-tRNA(Gln) in organisms which lack glutaminyl-tRNA synthetase. The reaction takes place in the presence of glutamine and ATP through an activated gamma-phospho-Glu-tRNA(Gln). The sequence is that of Glutamyl-tRNA(Gln) amidotransferase subunit A from Bacillus velezensis (strain DSM 23117 / BGSC 10A6 / LMG 26770 / FZB42) (Bacillus amyloliquefaciens subsp. plantarum).